Reading from the N-terminus, the 272-residue chain is MNPYIEILRPTNALMAFIAVLLMAIIGHTYNYEIILGSLCVFIATGSGNTINDYYDYEIDRINAPNRPIPSGKIELKRALYYSLILFLVSIILGFIISLENGIVVILCTILMIIYAYDLKQRCFIGNLCVAILTGLTFVFGGLITKDVNLGFILGFFAFLMTLSREIIKDIEDIEGDKKEDAHTLPIIYGTKKAVMLAVILNIITCILSPLLYYYNIFSIVYLIIIIIADIIFVYSAYLAVQNQSKESMHKISKYMKIGMLIAFVSFAMGAL.

8 consecutive transmembrane segments (helical) span residues 16–36 (AFIA…EIIL), 79–99 (ALYY…IISL), 100–120 (ENGI…YDLK), 124–144 (FIGN…GGLI), 148–168 (VNLG…REII), 194–214 (AVML…LLYY), 217–237 (IFSI…VYSA), and 252–272 (ISKY…MGAL).

This sequence belongs to the UbiA prenyltransferase family. DGGGP synthase subfamily. Requires Mg(2+) as cofactor.

It is found in the cell membrane. It carries out the reaction sn-3-O-(geranylgeranyl)glycerol 1-phosphate + (2E,6E,10E)-geranylgeranyl diphosphate = 2,3-bis-O-(geranylgeranyl)-sn-glycerol 1-phosphate + diphosphate. It functions in the pathway membrane lipid metabolism; glycerophospholipid metabolism. In terms of biological role, prenyltransferase that catalyzes the transfer of the geranylgeranyl moiety of geranylgeranyl diphosphate (GGPP) to the C2 hydroxyl of (S)-3-O-geranylgeranylglyceryl phosphate (GGGP). This reaction is the second ether-bond-formation step in the biosynthesis of archaeal membrane lipids. The chain is Digeranylgeranylglyceryl phosphate synthase from Methanosphaera stadtmanae (strain ATCC 43021 / DSM 3091 / JCM 11832 / MCB-3).